The primary structure comprises 319 residues: Cytochrome c biogenesis protein CcsA (319 aa).

The next 7 membrane-spanning stretches (helical) occupy residues 9–29, 44–64, 68–88, 143–163, 223–243, 257–271, and 286–306; these read ILTH…LITL, GMIV…ASSG, LSNL…LHTI, MLLS…ILII, VISL…VWAN, TWAF…IYLH, and VASI…LLGI.

The protein belongs to the CcmF/CycK/Ccl1/NrfE/CcsA family. In terms of assembly, may interact with Ccs1.

It localises to the plastid. The protein resides in the chloroplast thylakoid membrane. In terms of biological role, required during biogenesis of c-type cytochromes (cytochrome c6 and cytochrome f) at the step of heme attachment. This chain is Cytochrome c biogenesis protein CcsA, found in Agrostis stolonifera (Creeping bentgrass).